Here is a 513-residue protein sequence, read N- to C-terminus: Calcium-dependent protein kinase 2 (513 aa).

G2 is lipidated: N-myristoyl glycine. A Protein kinase domain is found at Y72–I326. Residues L78–V86 and K101 each bind ATP. Catalysis depends on D192, which acts as the Proton acceptor. The short motif at N345–N353 is the J domain autoinhibitory motif element. The segment at N345–I380 is j domain. Positions E354–I363 match the J domain EF-hand interaction motif motif. 4 consecutive EF-hand domains span residues V370–Q405, K406–Y441, L442–E477, and L480–K513. Ca(2+) contacts are provided by D383, D385, S387, T389, and E394. Positions 455, 457, 459, 461, 466, 493, 495, 497, 499, and 504 each coordinate Ca(2+).

Belongs to the protein kinase superfamily. Ser/Thr protein kinase family. CDPK subfamily. In terms of assembly, monomer. The cofactor is Mg(2+). Myristoylated; myristoylation may target it to different subcellular compartments. In terms of processing, autophosphorylated in vitro.

The enzyme catalyses L-seryl-[protein] + ATP = O-phospho-L-seryl-[protein] + ADP + H(+). It carries out the reaction L-threonyl-[protein] + ATP = O-phospho-L-threonyl-[protein] + ADP + H(+). Its activity is regulated as follows. Activated by calcium. Upon calcium binding to the EF-hand domains, the C-terminus of the junction domain (J domain) undergoes a conformational change which results in the dissociation of the pseudo-substrate inhibitory motif from the catalytic domain. This, in turn, may facilitate the autophosphorylation of the activation loop at Thr-232, which leads to the kinase activation. In terms of biological role, calcium-dependent protein kinase which acts as a sensor and effector of intracellular Ca(2+) levels probably in part downstream of cGMP-activated PKG kinase. During male gametogenesis in the mosquito gut, required for male exflagellation, possibly by regulating male gamete exit from the host erythrocytes. Not required for asexual blood stage proliferation. The chain is Calcium-dependent protein kinase 2 from Plasmodium falciparum (isolate K1 / Thailand).